We begin with the raw amino-acid sequence, 377 residues long: Nucleosome assembly protein 1;2 (377 aa).

Positions 26-80 form a coiled coil; it reads VNVLKNKLHDLTGKHSNVTESLSPNVRKRVEALREIQTEHDELEAKFFEERAALE. Positions 47-62 match the Nuclear export signal motif; that stretch reads LSPNVRKRVEALREIQ. Residues 223-228 carry the Nuclear localization signal motif; it reads KKKPKK. The tract at residues 298–377 is disordered; the sequence is EAAEDDYAEL…GERPPECKQQ (80 aa). The span at 299–342 shows a compositional bias: acidic residues; that stretch reads AAEDDYAELEDDEDEDDDEEDDEDEDEEEEDEEDDEDEEEDEDE. C374 is subject to Cysteine methyl ester. C374 carries S-farnesyl cysteine lipidation. The propeptide at 375 to 377 is removed in mature form; it reads KQQ.

It belongs to the nucleosome assembly protein (NAP) family. Binds preferentially histone H1 in vitro. Interacts with CYCB1;1.

Its subcellular location is the nucleus. It localises to the cytoplasm. Functionally, may modulate chromatin structure by regulation of nucleosome assembly/disassembly. Could function together with B-type cyclins in the regulation of microtubule dynamics. This chain is Nucleosome assembly protein 1;2 (NAP1;2), found in Nicotiana tabacum (Common tobacco).